The sequence spans 240 residues: UDP-2,3-diacylglucosamine hydrolase (240 aa).

Residues Asp-8, His-10, Asp-41, Asn-79, and His-114 each contribute to the Mn(2+) site. Residue Asn-79–Arg-80 participates in substrate binding. Substrate-binding residues include Asp-122, Ser-160, Asn-164, Lys-167, and His-195. Residues His-195 and His-197 each coordinate Mn(2+).

The protein belongs to the LpxH family. Mn(2+) is required as a cofactor.

The protein localises to the cell inner membrane. It carries out the reaction UDP-2-N,3-O-bis[(3R)-3-hydroxytetradecanoyl]-alpha-D-glucosamine + H2O = 2-N,3-O-bis[(3R)-3-hydroxytetradecanoyl]-alpha-D-glucosaminyl 1-phosphate + UMP + 2 H(+). It participates in glycolipid biosynthesis; lipid IV(A) biosynthesis; lipid IV(A) from (3R)-3-hydroxytetradecanoyl-[acyl-carrier-protein] and UDP-N-acetyl-alpha-D-glucosamine: step 4/6. In terms of biological role, hydrolyzes the pyrophosphate bond of UDP-2,3-diacylglucosamine to yield 2,3-diacylglucosamine 1-phosphate (lipid X) and UMP by catalyzing the attack of water at the alpha-P atom. Involved in the biosynthesis of lipid A, a phosphorylated glycolipid that anchors the lipopolysaccharide to the outer membrane of the cell. The protein is UDP-2,3-diacylglucosamine hydrolase of Yersinia pestis bv. Antiqua (strain Angola).